The sequence spans 278 residues: Sulfur carrier protein FdhD (278 aa).

The active-site Cysteine persulfide intermediate is C121. Position 260 to 265 (260 to 265) interacts with Mo-bis(molybdopterin guanine dinucleotide); the sequence is FCKPGR.

The protein belongs to the FdhD family.

The protein resides in the cytoplasm. Functionally, required for formate dehydrogenase (FDH) activity. Acts as a sulfur carrier protein that transfers sulfur from IscS to the molybdenum cofactor prior to its insertion into FDH. The sequence is that of Sulfur carrier protein FdhD from Salmonella choleraesuis (strain SC-B67).